Here is a 181-residue protein sequence, read N- to C-terminus: Cytochrome c oxidase subunit 2 (181 aa).

Residues cysteine 126, glutamate 128, cysteine 130, histidine 134, and methionine 137 each coordinate Cu cation. A Mg(2+)-binding site is contributed by glutamate 128.

The protein belongs to the cytochrome c oxidase subunit 2 family. In terms of assembly, component of the cytochrome c oxidase (complex IV, CIV), a multisubunit enzyme composed of a catalytic core of 3 subunits and several supernumerary subunits. The complex exists as a monomer or a dimer and forms supercomplexes (SCs) in the inner mitochondrial membrane with ubiquinol-cytochrome c oxidoreductase (cytochrome b-c1 complex, complex III, CIII). The cofactor is Cu cation.

Its subcellular location is the mitochondrion inner membrane. The enzyme catalyses 4 Fe(II)-[cytochrome c] + O2 + 8 H(+)(in) = 4 Fe(III)-[cytochrome c] + 2 H2O + 4 H(+)(out). Component of the cytochrome c oxidase, the last enzyme in the mitochondrial electron transport chain which drives oxidative phosphorylation. The respiratory chain contains 3 multisubunit complexes succinate dehydrogenase (complex II, CII), ubiquinol-cytochrome c oxidoreductase (cytochrome b-c1 complex, complex III, CIII) and cytochrome c oxidase (complex IV, CIV), that cooperate to transfer electrons derived from NADH and succinate to molecular oxygen, creating an electrochemical gradient over the inner membrane that drives transmembrane transport and the ATP synthase. Cytochrome c oxidase is the component of the respiratory chain that catalyzes the reduction of oxygen to water. Electrons originating from reduced cytochrome c in the intermembrane space (IMS) are transferred via the dinuclear copper A center (CU(A)) of subunit 2 and heme A of subunit 1 to the active site in subunit 1, a binuclear center (BNC) formed by heme A3 and copper B (CU(B)). The BNC reduces molecular oxygen to 2 water molecules using 4 electrons from cytochrome c in the IMS and 4 protons from the mitochondrial matrix. In Paramecium primaurelia, this protein is Cytochrome c oxidase subunit 2 (COII).